The sequence spans 81 residues: Short neurotoxin 1 (81 aa).

The first 21 residues, 1 to 21, serve as a signal peptide directing secretion; the sequence is MKTLLLTLVVVTIVCLDLGYT. Intrachain disulfides connect Cys24/Cys43, Cys38/Cys60, Cys62/Cys73, and Cys74/Cys79.

It belongs to the three-finger toxin family. Short-chain subfamily. Type I alpha-neurotoxin sub-subfamily. In terms of tissue distribution, expressed by the venom gland.

It localises to the secreted. Binds to muscle nicotinic acetylcholine receptor (nAChR) and inhibit acetylcholine from binding to the receptor, thereby impairing neuromuscular transmission. This is Short neurotoxin 1 from Tropidechis carinatus (Australian rough-scaled snake).